We begin with the raw amino-acid sequence, 695 residues long: Polyribonucleotide nucleotidyltransferase (695 aa).

Mg(2+) is bound by residues Asp-488 and Asp-494. Residues 554 to 613 (PKTTIIKIKTDKIRDLIGRGGETIKGIISTSCASIDVDDSGNVNIFSNNQKSFDTAVQMV) enclose the KH domain. Positions 623 to 690 (NKVYTGKVVK…DRGRIKLSRK (68 aa)) constitute an S1 motif domain.

The protein belongs to the polyribonucleotide nucleotidyltransferase family. As to quaternary structure, component of the RNA degradosome, which is a multiprotein complex involved in RNA processing and mRNA degradation. It depends on Mg(2+) as a cofactor.

It is found in the cytoplasm. The enzyme catalyses RNA(n+1) + phosphate = RNA(n) + a ribonucleoside 5'-diphosphate. Its function is as follows. Involved in mRNA degradation. Catalyzes the phosphorolysis of single-stranded polyribonucleotides processively in the 3'- to 5'-direction. This chain is Polyribonucleotide nucleotidyltransferase, found in Vesicomyosocius okutanii subsp. Calyptogena okutanii (strain HA).